The sequence spans 180 residues: MLKLLSEIGPVIAFFAGFFYGGGIQNATLYMLITSIICITLCYIIDKKVSKLSIISSTVLFISGIITLISGDSMYIKIKPTILYVIFGIIFLMSGIKKNPFIKYALESIVRLKEESWIILSYRTAAFFFFMAVVNEVVWRNFSDETWVKFKVFGVIPITFIFILLQLPLLLKNKLPDSKI.

5 helical membrane-spanning segments follow: residues Q25–I45, V49–I69, I76–I96, I118–V138, and F150–L170.

It belongs to the YciB family.

The protein localises to the cell inner membrane. Plays a role in cell envelope biogenesis, maintenance of cell envelope integrity and membrane homeostasis. The polypeptide is Inner membrane-spanning protein YciB (Rickettsia prowazekii (strain Madrid E)).